Here is a 209-residue protein sequence, read N- to C-terminus: Ion-translocating oxidoreductase complex subunit G (209 aa).

The Cytoplasmic segment spans residues 1–8; the sequence is MLTAIRKN. The helical transmembrane segment at 9-29 threads the bilayer; the sequence is GLILAVFACVSTGLVALTYAL. Topologically, residues 30–209 are periplasmic; that stretch reads TAEQIQQQEQ…HNQPNPCEGQ (180 aa). Threonine 175 carries the FMN phosphoryl threonine modification.

The protein belongs to the RnfG family. In terms of assembly, the complex is composed of six subunits: RnfA, RnfB, RnfC, RnfD, RnfE and RnfG. FMN serves as cofactor.

The protein localises to the cell inner membrane. Its function is as follows. Part of a membrane-bound complex that couples electron transfer with translocation of ions across the membrane. The protein is Ion-translocating oxidoreductase complex subunit G of Vibrio cholerae serotype O1 (strain ATCC 39541 / Classical Ogawa 395 / O395).